A 145-amino-acid chain; its full sequence is Small ribosomal subunit protein uS9 (145 aa).

Positions 1–13 (MATDQHSNKSNVS) are enriched in polar residues. Residues 1–24 (MATDQHSNKSNVSAARKPLSPSPT) form a disordered region.

Belongs to the universal ribosomal protein uS9 family.

The protein resides in the cytoplasm. This Lupinus polyphyllus (Large-leaved lupine) protein is Small ribosomal subunit protein uS9 (RPS16).